Consider the following 542-residue polypeptide: Importin subunit alpha-1 (542 aa).

The tract at residues 1–29 (MSASSRFIPEHRRQNYKGKGTFQADELRR) is disordered. Positions 1–60 (MSASSRFIPEHRRQNYKGKGTFQADELRRRRETQQIEIRKQKREENLNKRRNLVDVQEPA) constitute an IBB domain. ARM repeat units lie at residues 114–155 (IQKV…SSNQ), 156–197 (THVV…SPMC), 198–240 (RDHV…KNPQ), 241–282 (PDWN…ANEK), 283–324 (IQAI…DDVQ), 325–366 (TQVI…NSSQ), 367–408 (IQYV…GARR), and 409–453 (PDQI…GELD).

This sequence belongs to the importin alpha family. Interacts with pap1.

It localises to the nucleus. Functionally, binds specifically and directly to substrates containing either a simple or bipartite NLS motif. Promotes docking of import substrates to the nuclear envelope. Seems to act as a cytosolic receptor for both simple and bipartite NLS motifs. Has an essential role in mitotic chromosome condensation. Involved in nuclear protein import. Required for efficient nuclear import of both an SV40 nuclear localization signal-containing reporter protein and the pap1 component of the stress response MAP kinase pathway. Required for proper mitotic progression. The protein is Importin subunit alpha-1 (cut15) of Schizosaccharomyces pombe (strain 972 / ATCC 24843) (Fission yeast).